The primary structure comprises 462 residues: Bifunctional enzyme LpxC/FabZ (462 aa).

Residues 1 to 302 (MQKQQTLKDK…MARLIRKEIK (302 aa)) are UDP-3-O-acyl-N-acetylglucosamine deacetylase. Residues His-78, His-260, and Asp-264 each coordinate Zn(2+). The active-site Proton donor is His-287. The tract at residues 303-462 (QNEAQAPVYN…FMAQIIQNKE (160 aa)) is 3-hydroxyacyl-[acyl-carrier-protein] dehydratase. The active site involves His-364.

The protein in the N-terminal section; belongs to the LpxC family. It in the C-terminal section; belongs to the thioester dehydratase family. Zn(2+) is required as a cofactor.

It is found in the cytoplasm. The catalysed reaction is a UDP-3-O-[(3R)-3-hydroxyacyl]-N-acetyl-alpha-D-glucosamine + H2O = a UDP-3-O-[(3R)-3-hydroxyacyl]-alpha-D-glucosamine + acetate. The enzyme catalyses a (3R)-hydroxyacyl-[ACP] = a (2E)-enoyl-[ACP] + H2O. Its pathway is glycolipid biosynthesis; lipid IV(A) biosynthesis; lipid IV(A) from (3R)-3-hydroxytetradecanoyl-[acyl-carrier-protein] and UDP-N-acetyl-alpha-D-glucosamine: step 2/6. In terms of biological role, catalyzes the hydrolysis of UDP-3-O-myristoyl-N-acetylglucosamine to form UDP-3-O-myristoylglucosamine and acetate, the committed step in lipid A biosynthesis. Its function is as follows. Involved in unsaturated fatty acids biosynthesis. Catalyzes the dehydration of short chain beta-hydroxyacyl-ACPs and long chain saturated and unsaturated beta-hydroxyacyl-ACPs. This is Bifunctional enzyme LpxC/FabZ (lpxC/fabZ) from Porphyromonas gingivalis (strain ATCC BAA-308 / W83).